Here is a 297-residue protein sequence, read N- to C-terminus: Light-independent protochlorophyllide reductase iron-sulfur ATP-binding protein (297 aa).

ATP is bound by residues 41 to 46 and Lys-70; that span reads GIGKST. Ser-45 is a Mg(2+) binding site. [4Fe-4S] cluster contacts are provided by Cys-126 and Cys-160. ATP-binding positions include 211 to 212 and 235 to 237; these read NR and PDL.

Belongs to the NifH/BchL/ChlL family. In terms of assembly, homodimer. Protochlorophyllide reductase is composed of three subunits; BchL, BchN and BchB. [4Fe-4S] cluster serves as cofactor.

The enzyme catalyses chlorophyllide a + oxidized 2[4Fe-4S]-[ferredoxin] + 2 ADP + 2 phosphate = protochlorophyllide a + reduced 2[4Fe-4S]-[ferredoxin] + 2 ATP + 2 H2O. It functions in the pathway porphyrin-containing compound metabolism; bacteriochlorophyll biosynthesis (light-independent). In terms of biological role, component of the dark-operative protochlorophyllide reductase (DPOR) that uses Mg-ATP and reduced ferredoxin to reduce ring D of protochlorophyllide (Pchlide) to form chlorophyllide a (Chlide). This reaction is light-independent. The L component serves as a unique electron donor to the NB-component of the complex, and binds Mg-ATP. The protein is Light-independent protochlorophyllide reductase iron-sulfur ATP-binding protein of Cereibacter sphaeroides (strain ATCC 17025 / ATH 2.4.3) (Rhodobacter sphaeroides).